A 307-amino-acid chain; its full sequence is tRNA pseudouridine synthase B (307 aa).

Asp48 (nucleophile) is an active-site residue.

The protein belongs to the pseudouridine synthase TruB family. Type 1 subfamily.

The catalysed reaction is uridine(55) in tRNA = pseudouridine(55) in tRNA. Responsible for synthesis of pseudouridine from uracil-55 in the psi GC loop of transfer RNAs. This Neisseria meningitidis serogroup B (strain ATCC BAA-335 / MC58) protein is tRNA pseudouridine synthase B.